Reading from the N-terminus, the 235-residue chain is DnaA regulatory inactivator Hda (235 aa).

This sequence belongs to the DnaA family. HdA subfamily. The active form seems to be an ADP-bound monomer. Forms the RIDA complex (regulatory inactivation of DnaA) of ATP-DnaA, ADP-Hda and the DNA-loaded beta sliding clamp (dnaN).

Mediates the interaction of DNA replication initiator protein DnaA with DNA polymerase subunit beta sliding clamp (dnaN). Stimulates hydrolysis of ATP-DnaA to ADP-DnaA, rendering DnaA inactive for reinitiation, a process called regulatory inhibition of DnaA or RIDA. This Yersinia pestis bv. Antiqua (strain Antiqua) protein is DnaA regulatory inactivator Hda.